The primary structure comprises 203 residues: Holliday junction branch migration complex subunit RuvA (203 aa).

Residues 1–65 (MIAYIHGKLL…EDAFDLYGFP (65 aa)) form a domain I region. Residues 66-144 (CFDDREVFRT…TLKSATVRSG (79 aa)) form a domain II region. A flexible linker region spans residues 145–155 (ACPVEGDRSEF). The segment at 155–203 (FLDALSGLRNLGYGDDEVRDFLKDIFDEEPDLDAGGAIRVALKKISQNK) is domain III.

The protein belongs to the RuvA family. Homotetramer. Forms an RuvA(8)-RuvB(12)-Holliday junction (HJ) complex. HJ DNA is sandwiched between 2 RuvA tetramers; dsDNA enters through RuvA and exits via RuvB. An RuvB hexamer assembles on each DNA strand where it exits the tetramer. Each RuvB hexamer is contacted by two RuvA subunits (via domain III) on 2 adjacent RuvB subunits; this complex drives branch migration. In the full resolvosome a probable DNA-RuvA(4)-RuvB(12)-RuvC(2) complex forms which resolves the HJ.

The protein resides in the cytoplasm. The RuvA-RuvB-RuvC complex processes Holliday junction (HJ) DNA during genetic recombination and DNA repair, while the RuvA-RuvB complex plays an important role in the rescue of blocked DNA replication forks via replication fork reversal (RFR). RuvA specifically binds to HJ cruciform DNA, conferring on it an open structure. The RuvB hexamer acts as an ATP-dependent pump, pulling dsDNA into and through the RuvAB complex. HJ branch migration allows RuvC to scan DNA until it finds its consensus sequence, where it cleaves and resolves the cruciform DNA. This is Holliday junction branch migration complex subunit RuvA from Maridesulfovibrio salexigens (strain ATCC 14822 / DSM 2638 / NCIMB 8403 / VKM B-1763) (Desulfovibrio salexigens).